The sequence spans 116 residues: POU domain, class 4, transcription factor 1 (116 aa).

Positions 1-54 (VTQADVGSALANLKIPGVGSLSQSTICRFESLTLSHNNMIALKPILQAWLEEAE) constitute a POU-specific domain. Residues 56–79 (AQREKMNKPELFNGGEKKRKRTSI) are disordered. A DNA-binding region (homeobox) is located at residues 72–116 (KKRKRTSIAAPEKRSLEAYFAVQPRPSSEKIAAIAEKLDLKKNVV).

Belongs to the POU transcription factor family. Class-4 subfamily.

It is found in the nucleus. It localises to the cytoplasm. Multifunctional transcription factor with different regions mediating its different effects. Acts by binding (via its C-terminal domain) to sequences related to the consensus octamer motif 5'-ATGCAAAT-3' in the regulatory regions of its target genes. Regulates the expression of specific genes involved in differentiation and survival within a subset of neuronal lineages. It has been shown that activation of some of these genes requires its N-terminal domain, maybe through a neuronal-specific cofactor. This Gallus gallus (Chicken) protein is POU domain, class 4, transcription factor 1 (POU4F1).